We begin with the raw amino-acid sequence, 100 residues long: MTFFLKRKISFFLSGIAQTFLFLPILLNRSVIHVVFLTVVLGHRIPWDSVIRCNNTGTTHSAVSSRTELLLPIGGVINNWKRRAWNGFSIQWIWRYSFVY.

This is an uncharacterized protein from Saccharomyces cerevisiae (strain ATCC 204508 / S288c) (Baker's yeast).